The following is a 122-amino-acid chain: Large ribosomal subunit protein uL14 (122 aa).

Belongs to the universal ribosomal protein uL14 family. In terms of assembly, part of the 50S ribosomal subunit. Forms a cluster with proteins L3 and L19. In the 70S ribosome, L14 and L19 interact and together make contacts with the 16S rRNA in bridges B5 and B8.

Functionally, binds to 23S rRNA. Forms part of two intersubunit bridges in the 70S ribosome. The protein is Large ribosomal subunit protein uL14 of Bacillus velezensis (strain DSM 23117 / BGSC 10A6 / LMG 26770 / FZB42) (Bacillus amyloliquefaciens subsp. plantarum).